The following is a 319-amino-acid chain: Acyl-coenzyme A thioesterase 8 (319 aa).

The interval 1-20 is disordered; it reads MSSPQAPEDGQGCGDRGDPP. Active-site charge relay system residues include Asp232, Ser254, and Gln304. Positions 317-319 match the Microbody targeting signal motif; the sequence is SKL.

This sequence belongs to the C/M/P thioester hydrolase family. Homodimer. As to quaternary structure, (Microbial infection) Interacts with human immunodeficiency virus (HIV-1) Nef (via middle region); this interaction enhances ACOT8 Acyl-CoA thioesterase activity and occurs in a Nef myristoylation-independent manner. According to a second report, the interaction with HIV-1 Nef occurs in a Nef myristoylation-independent manner but does not enhance ACOT8 Acyl-CoA thioesterase activity. In terms of tissue distribution, detected in a T-cell line (at protein level). Ubiquitous.

The protein resides in the peroxisome matrix. The catalysed reaction is choloyl-CoA + H2O = cholate + CoA + H(+). It catalyses the reaction chenodeoxycholoyl-CoA + H2O = chenodeoxycholate + CoA + H(+). It carries out the reaction acetyl-CoA + H2O = acetate + CoA + H(+). The enzyme catalyses butanoyl-CoA + H2O = butanoate + CoA + H(+). The catalysed reaction is 2-methylpropanoyl-CoA + H2O = 2-methylpropanoate + CoA + H(+). It catalyses the reaction hexanoyl-CoA + H2O = hexanoate + CoA + H(+). It carries out the reaction octanoyl-CoA + H2O = octanoate + CoA + H(+). The enzyme catalyses decanoyl-CoA + H2O = decanoate + CoA + H(+). The catalysed reaction is dodecanoyl-CoA + H2O = dodecanoate + CoA + H(+). It catalyses the reaction tetradecanoyl-CoA + H2O = tetradecanoate + CoA + H(+). It carries out the reaction hexadecanoyl-CoA + H2O = hexadecanoate + CoA + H(+). The enzyme catalyses octadecanoyl-CoA + H2O = octadecanoate + CoA + H(+). The catalysed reaction is malonyl-CoA + H2O = malonate + CoA + H(+). It catalyses the reaction acetoacetyl-CoA + H2O = acetoacetate + CoA + H(+). It carries out the reaction propanoyl-CoA + H2O = propanoate + CoA + H(+). The enzyme catalyses succinyl-CoA + H2O = succinate + CoA + H(+). The catalysed reaction is glutaryl-CoA + H2O = glutarate + CoA + H(+). It catalyses the reaction hexanedioyl-CoA + H2O = hexanedioate + CoA + H(+). It carries out the reaction octanedioyl-CoA + H2O = octanedioate + CoA + H(+). The enzyme catalyses decanedioyl-CoA + H2O = decanedioate + CoA + H(+). The catalysed reaction is dodecanedioyl-CoA + H2O = dodecanedioate + CoA + H(+). It catalyses the reaction (9Z)-tetradecenoyl-CoA + H2O = (9Z)-tetradecenoate + CoA + H(+). It carries out the reaction (9Z)-hexadecenoyl-CoA + H2O = (9Z)-hexadecenoate + CoA + H(+). The enzyme catalyses (9Z)-octadecenoyl-CoA + H2O = (9Z)-octadecenoate + CoA + H(+). The catalysed reaction is (9Z,12Z)-octadecadienoyl-CoA + H2O = (9Z,12Z)-octadecadienoate + CoA + H(+). It catalyses the reaction eicosanoyl-CoA + H2O = eicosanoate + CoA + H(+). It carries out the reaction (5Z,8Z,11Z,14Z)-eicosatetraenoyl-CoA + H2O = (5Z,8Z,11Z,14Z)-eicosatetraenoate + CoA + H(+). The enzyme catalyses 4,8-dimethylnonanoyl-CoA + H2O = 4,8-dimethylnonanoate + CoA + H(+). The catalysed reaction is 2,6-dimethylheptanoyl-CoA + H2O = 2,6-dimethylheptanoate + CoA + H(+). It catalyses the reaction (3S)-3-hydroxy-3-methylglutaryl-CoA + H2O = 3-hydroxy-3-methylglutarate + CoA + H(+). It carries out the reaction 3alpha,7alpha,12alpha-trihydroxy-5beta-cholestan-26-oyl-CoA + H2O = 3alpha,7alpha,12alpha-trihydroxy-5beta-cholestan-26-oate + CoA + H(+). The enzyme catalyses 2-methyloctadecanoyl-CoA + H2O = 2-methyloctadecanoate + CoA + H(+). The catalysed reaction is prostaglandin F2alpha-CoA + H2O = prostaglandin F2alpha + CoA + H(+). It participates in lipid metabolism; fatty acid metabolism. Inhibited by CoASH (IC(50)=10-15 uM). Also inhibited by cysteine-reactive agents. Functionally, catalyzes the hydrolysis of acyl-CoAs into free fatty acids and coenzyme A (CoASH), regulating their respective intracellular levels. Displays no strong substrate specificity with respect to the carboxylic acid moiety of Acyl-CoAs. Hydrolyzes medium length (C2 to C20) straight-chain, saturated and unsaturated acyl-CoAS but is inactive towards substrates with longer aliphatic chains. Moreover, it catalyzes the hydrolysis of CoA esters of bile acids, such as choloyl-CoA and chenodeoxycholoyl-CoA and competes with bile acid CoA:amino acid N-acyltransferase (BAAT). Is also able to hydrolyze CoA esters of dicarboxylic acids. It is involved in the metabolic regulation of peroxisome proliferation. (Microbial infection) May mediate Nef-induced down-regulation of CD4 cell-surface expression. The protein is Acyl-coenzyme A thioesterase 8 (ACOT8) of Homo sapiens (Human).